The following is a 278-amino-acid chain: Orotidine 5'-phosphate decarboxylase (278 aa).

Substrate is bound by residues Asp-40, 62–64 (KTH), 93–102 (DRKFIDIGNT), Tyr-228, and Arg-246. Lys-95 acts as the Proton donor in catalysis.

Belongs to the OMP decarboxylase family.

It carries out the reaction orotidine 5'-phosphate + H(+) = UMP + CO2. It functions in the pathway pyrimidine metabolism; UMP biosynthesis via de novo pathway; UMP from orotate: step 2/2. The chain is Orotidine 5'-phosphate decarboxylase (PYR1) from Passalora fulva (Tomato leaf mold).